The sequence spans 741 residues: Prestin (741 aa).

The Cytoplasmic segment spans residues 1-79 (MDHVEETEIL…WLPAYRFKEY (79 aa)). The helical transmembrane segment at 80–105 (VLGDIVSGISTGVLQLPQGLAFAMLA) threads the bilayer. The Extracellular segment spans residues 106–109 (AVPP). A helical membrane pass occupies residues 110-125 (VFGLYSSFYPVIMYCF). At 126 to 137 (FGTSRHISIGPF) the chain is on the cytoplasmic side. The chain crosses the membrane as a helical span at residues 138-147 (AVISLMIGGV). Residues 148–178 (AVRLVPDDIVIPGGVNATNSTEARDALRVKV) are Extracellular-facing. Positions 158-168 (IPGGVNATNST) match the Involved in motor function motif. N-linked (GlcNAc...) asparagine glycans are attached at residues N163 and N166. A run of 2 helical transmembrane segments spans residues 179 to 208 (AMSV…LTEP) and 209 to 230 (LVRG…KYLF). Over 231-243 (GVKTKRYSGIFSV) the chain is Extracellular. The helical intramembrane region spans 244–248 (VYSTV). Over 249–261 (AVLQNVKNLNVCS) the chain is Extracellular. Residues 262-283 (LGVGLMVFGLLLGGKEFNERFK) form a helical membrane-spanning segment. The Cytoplasmic segment spans residues 284–291 (EKLPAPIP). Residues 292 to 303 (LEFFAVVMGTGI) traverse the membrane as a helical segment. Over 304 to 338 (SAGFSLHESYNVDVVGTLPLGLLPPANPDTSLFHL) the chain is Extracellular. The chain crosses the membrane as a helical span at residues 339-361 (VYVDAIAIAIVGFSVTISMAKTL). Over 362–370 (ANKHGYQVD) the chain is Cytoplasmic. The helical transmembrane segment at 371 to 388 (GNQELIALGLCNSTGSLF) threads the bilayer. Residues 389 to 396 (QTFAISCS) lie on the Extracellular side of the membrane. Residues 397–406 (LSRSLVQEGT) traverse the membrane as a helical segment. S398 is a binding site for salicylate. The Cytoplasmic portion of the chain corresponds to 407-410 (GGKT). A helical membrane pass occupies residues 411-429 (QLAGCLASLMILLVILATG). Over 430-436 (FLFESLP) the chain is Extracellular. A helical membrane pass occupies residues 437 to 459 (QAVLSAIVIVNLKGMFMQFSDLP). Topologically, residues 460 to 467 (FFWRTSKI) are cytoplasmic. A helical transmembrane segment spans residues 468–483 (ELTIWLTTFVSSLFLG). A topological domain (extracellular) is located at residue L484. A helical membrane pass occupies residues 485–498 (DYGLITAVIIALMT). Residues 499 to 741 (VIYRTQSPSY…DSEPNATPEA (243 aa)) are Cytoplasmic-facing. The interval 505-718 (SPSYIVLGQL…AVLGSQVREA (214 aa)) is extended region for STAS domain. The STAS domain occupies 525 to 713 (AYEEVKEVPG…HSIHDAVLGS (189 aa)). Residues 718–741 (ALAEQEATAAPPQEDSEPNATPEA) form a disordered region. Positions 721–730 (EQEATAAPPQ) are enriched in low complexity.

It belongs to the SLC26A/SulP transporter (TC 2.A.53) family. As to quaternary structure, homodimer. Interacts (via STAS domain) with CALM; this interaction is calcium-dependent and the STAS domain interacts with only one lobe of CALM which is an elongated conformation.

The protein resides in the cell membrane. The catalysed reaction is 2 hydrogencarbonate(in) + chloride(out) = 2 hydrogencarbonate(out) + chloride(in). In terms of biological role, voltage-sensitive motor protein that drives outer hair cell (OHC) electromotility (eM) and participates in sound amplification in the hearing organ. Converts changes in the transmembrane electric potential into mechanical displacements resulting in the coupling of its expansion to movement of a charged voltage sensor across the lipid membrane. The nature of the voltage sensor is not completely clear, and two models compete. In the first model, acts as an incomplete transporter where intracellular chloride anion acts as extrinsic voltage sensor that drives conformational change in the protein which is sufficient to produce a length change in the plane of the membrane and hence in the length of the OHC. The second model in which multiple charged amino acid residues are distributed at the intracellular and extracellular membrane interfaces that form an intrinsic voltage sensor, whose movement produces the non-linear capacitance (NLC). However, the effective voltage sensor may be the result of a hybrid voltage sensor assembled from intrinsic charge (charged residues) and extrinsic charge (bound anion). Notably, binding of anions to the anion-binding pocket partially neutralizes the intrinsic positive charge rather than to form an electrically negative sensor, therefore remaining charge may serve as voltage sensor that, after depolarization, moves from down (expanded state) to up (contracted) conformation, which is accompanied by an eccentric contraction of the intermembrane cross-sectional area of the protein as well as a major increase in the hydrophobic thickness of the protein having as consequences the plasma membrane thickening and the cell contraction after membrane depolarization. The anion-binding pocket transits from the inward-open (Down) state, where it is exposed toward the intracellular solvent in the absence of anion, to the occluded (Up) state upon anion binding. Salicylate competes for the anion-binding site and inhibits the voltage-sensor movement, and therefore inhibits the charge transfer and electromotility by displacing Cl(-) from the anion-binding site and by preventing the structural transitions to the contracted state. In addition, can act as a weak Cl(-)/HCO3 (-) antiporter across the cell membrane and so regulate the intracellular pH of the outer hair cells (OHCs), while firstly found as being unable to mediate electrogenic anion transport. Moreover, supports a role in cardiac mechanical amplification serving as an elastic element to enhance the actomyosin- based sarcomere contraction system. The polypeptide is Prestin (Tursiops truncatus (Atlantic bottle-nosed dolphin)).